The primary structure comprises 585 residues: A-type ATP synthase subunit A (585 aa).

237-244 (GPFGSGKT) lines the ATP pocket.

The protein belongs to the ATPase alpha/beta chains family. As to quaternary structure, has multiple subunits with at least A(3), B(3), C, D, E, F, H, I and proteolipid K(x).

The protein resides in the cell membrane. The catalysed reaction is ATP + H2O + 4 H(+)(in) = ADP + phosphate + 5 H(+)(out). Its function is as follows. Component of the A-type ATP synthase that produces ATP from ADP in the presence of a proton gradient across the membrane. The A chain is the catalytic subunit. This is A-type ATP synthase subunit A from Natronomonas pharaonis (strain ATCC 35678 / DSM 2160 / CIP 103997 / JCM 8858 / NBRC 14720 / NCIMB 2260 / Gabara) (Halobacterium pharaonis).